Here is a 202-residue protein sequence, read N- to C-terminus: Imidazole glycerol phosphate synthase subunit HisH (202 aa).

The Glutamine amidotransferase type-1 domain maps to 3-202 (RIVIIDYGLG…KILRNFVEMC (200 aa)). Catalysis depends on Cys79, which acts as the Nucleophile. Catalysis depends on residues His183 and Glu185.

Heterodimer of HisH and HisF.

The protein localises to the cytoplasm. It carries out the reaction 5-[(5-phospho-1-deoxy-D-ribulos-1-ylimino)methylamino]-1-(5-phospho-beta-D-ribosyl)imidazole-4-carboxamide + L-glutamine = D-erythro-1-(imidazol-4-yl)glycerol 3-phosphate + 5-amino-1-(5-phospho-beta-D-ribosyl)imidazole-4-carboxamide + L-glutamate + H(+). It catalyses the reaction L-glutamine + H2O = L-glutamate + NH4(+). Its pathway is amino-acid biosynthesis; L-histidine biosynthesis; L-histidine from 5-phospho-alpha-D-ribose 1-diphosphate: step 5/9. Its function is as follows. IGPS catalyzes the conversion of PRFAR and glutamine to IGP, AICAR and glutamate. The HisH subunit catalyzes the hydrolysis of glutamine to glutamate and ammonia as part of the synthesis of IGP and AICAR. The resulting ammonia molecule is channeled to the active site of HisF. The polypeptide is Imidazole glycerol phosphate synthase subunit HisH (Methanosarcina mazei (strain ATCC BAA-159 / DSM 3647 / Goe1 / Go1 / JCM 11833 / OCM 88) (Methanosarcina frisia)).